We begin with the raw amino-acid sequence, 2053 residues long: Integrator complex subunit 1 (2053 aa).

2 disordered regions span residues 36–58 and 249–285; these read KILP…ALAS and SLPS…ESEP. A compositionally biased stretch (polar residues) spans 268–283; sequence DNSTQSLDASPLNTES. A helical transmembrane segment spans residues 708–728; that stretch reads LAIIAFYWKAWLILLMISAHN.

It belongs to the Integrator subunit 1 family. As to quaternary structure, belongs to the multiprotein complex Integrator, at least composed of IntS1, IntS2, IntS3, IntS4, omd/IntS5, IntS6, defl/IntS7, IntS8, IntS9, IntS10, IntS11, IntS12, asun/IntS13, IntS14 and IntS15. The core complex associates with protein phosphatase 2A subunits mts/PP2A and Pp2A-29B, to form the Integrator-PP2A (INTAC) complex. Within the complex, interacts with IntS12 and IntS9. Interaction with IntS12 is likely to be important for promoting 3'-end processing of snRNAs. Interacts with Mediator complex members Cdk8 and CycC.

It localises to the nucleus membrane. The protein resides in the nucleus. Functionally, component of the integrator complex, a multiprotein complex that terminates RNA polymerase II (Pol II) transcription in the promoter-proximal region of genes. The integrator complex provides a quality checkpoint during transcription elongation by driving premature transcription termination of transcripts that are unfavorably configured for transcriptional elongation: the complex terminates transcription by (1) catalyzing dephosphorylation of the C-terminal domain (CTD) of Pol II subunit Polr2A/Rbp1 and Spt5, and (2) degrading the exiting nascent RNA transcript via endonuclease activity. The integrator complex is also involved in the 3'-end processing of the U7 snRNA, and also the spliceosomal snRNAs U1, U2, U4 and U5. Required for the normal expression of the Integrator complex component IntS12. This chain is Integrator complex subunit 1, found in Drosophila melanogaster (Fruit fly).